A 175-amino-acid chain; its full sequence is MEKIPVSAFLLLVALSYTLARDTTVKPGAKKDTKDSRPKLPQTLSRGWGDQLIWTQTYEEALYKSKTSNKPLMIIHHLDECPHSQALKKVFAENKEIQKLAEQFVLLNLVYETTDKHLSPDGQYVPRIMFVDPSLTVRADITGRYSNRLYAYEPADTALLLDNMKKALKLLKTEL.

An N-terminal signal peptide occupies residues 1-20 (MEKIPVSAFLLLVALSYTLA). The segment at 21–40 (RDTTVKPGAKKDTKDSRPKL) is required to promote cell adhesion. 2 short sequence motifs (homodimer stabilization; interchain) span residues 45 to 54 (SRGWGDQLIW) and 60 to 67 (EALYKSKT).

Belongs to the AGR family. In terms of assembly, monomer and homodimer. Interacts with LYPD3 and DAG1 (alphaDAG1). Interacts with MUC2; disulfide-linked. In terms of tissue distribution, expressed strongly in trachea, lung, stomach, colon, prostate and small intestine. Expressed weakly in pituitary gland, salivary gland, mammary gland, bladder, appendix, ovary, fetal lung, uterus, pancreas, kidney, fetal kidney, testis, placenta, thyroid gland and in estrogen receptor (ER)-positive breast cancer cell lines.

It is found in the secreted. It localises to the endoplasmic reticulum. In terms of biological role, required for MUC2 post-transcriptional synthesis and secretion. May play a role in the production of mucus by intestinal cells. Proto-oncogene that may play a role in cell migration, cell differentiation and cell growth. Promotes cell adhesion. The polypeptide is Anterior gradient protein 2 homolog (AGR2) (Homo sapiens (Human)).